A 274-amino-acid chain; its full sequence is 16S rRNA (guanine(1405)-N(7))-methyltransferase (274 aa).

S-adenosyl-L-methionine is bound by residues 102–108 (HISTRER), Ala133, Asp156, 182–183 (DL), Leu198, and Gln207.

It belongs to the methyltransferase superfamily. Aminoglycoside resistance family.

It carries out the reaction guanosine(1405) in 16S rRNA + S-adenosyl-L-methionine = N(7)-methylguanosine(1405) in 16S rRNA + S-adenosyl-L-homocysteine. In terms of biological role, specifically methylates the N(7) position of guanine 1405 in 16S rRNA. Confers resistance to various aminoglycosides, including gentamicin, kanamycin and sisomicin. The polypeptide is 16S rRNA (guanine(1405)-N(7))-methyltransferase (sgm) (Micromonospora zionensis).